Here is a 105-residue protein sequence, read N- to C-terminus: Unclassified hydrophobin D (105 aa).

Positions 1–18 (MKFYIVLLALAAFAMAEA) are cleaved as a signal peptide. 3 disulfide bridges follow: Cys35–Cys86, Cys42–Cys83, and Cys43–Cys49.

Its subcellular location is the secreted. The protein resides in the cell wall. Its function is as follows. Aerial growth, conidiation, and dispersal of filamentous fungi in the environment rely upon a capability of their secreting small amphipathic proteins called hydrophobins (HPBs) with low sequence identity. Class I can self-assemble into an outermost layer of rodlet bundles on aerial cell surfaces, conferring cellular hydrophobicity that supports fungal growth, development and dispersal; whereas Class II form highly ordered films at water-air interfaces through intermolecular interactions but contribute nothing to the rodlet structure. In P.expansum, hydrophobins contribute to germination, tolerance to cold stress and mycotoxins patulin and citrinin production. The sequence is that of Unclassified hydrophobin D from Penicillium expansum (Blue mold rot fungus).